We begin with the raw amino-acid sequence, 1383 residues long: Putative autophagy-related protein 11 (1383 aa).

2 coiled-coil regions span residues Asp16–Asn49 and Asn117–Glu324. 2 stretches are compositionally biased toward basic and acidic residues: residues Glu1151–Lys1224 and His1233–Glu1249. Residues Glu1151–Glu1249 are disordered.

It belongs to the ATG11 family.

In terms of biological role, involved in cytoplasm to vacuole transport (Cvt), pexophagy, mitophagy and nucleophagy. Works as scaffold proteins that recruit ATG proteins to the pre-autophagosome (PAS), the site of vesicle/autophagosome formation. The protein is Putative autophagy-related protein 11 of Plasmodium falciparum (isolate 3D7).